The sequence spans 101 residues: Protein Tat (101 aa).

The interaction with human CREBBP stretch occupies residues 1 to 24 (MEPVDPNLEPWKHPGSQPRTACTN). A transactivation region spans residues 1–48 (MEPVDPNLEPWKHPGSQPRTACTNCYCKKCCFHCQVCFITKGLGISYG). Positions 22, 25, and 27 each coordinate Zn(2+). Residues 22–37 (CTNCYCKKCCFHCQVC) form a cysteine-rich region. K28 carries the N6-acetyllysine; by host PCAF modification. Residues C30, H33, C34, and C37 each coordinate Zn(2+). Positions 38 to 48 (FITKGLGISYG) are core. The tract at residues 48–101 (GRKKRRQRQRAPDSSQNHQDSLSKQPSSQPRGDPTGPKESKKEVERETETDPLD) is disordered. Residues 49–57 (RKKRRQRQR) carry the Nuclear localization signal, RNA-binding (TAR), and protein transduction motif. Residues 49–86 (RKKRRQRQRAPDSSQNHQDSLSKQPSSQPRGDPTGPKE) are interaction with the host capping enzyme RNGTT. An N6-acetyllysine; by host EP300 and GCN5L2 mark is found at K50 and K51. Asymmetric dimethylarginine; by host PRMT6 occurs at positions 52 and 53. Polar residues predominate over residues 59–77 (PDSSQNHQDSLSKQPSSQP). A Glycyl lysine isopeptide (Lys-Gly) (interchain with G-Cter in ubiquitin) cross-link involves residue K71. The short motif at 78–80 (RGD) is the Cell attachment site element. Over residues 83-101 (GPKESKKEVERETETDPLD) the composition is skewed to basic and acidic residues.

The protein belongs to the lentiviruses Tat family. Interacts with host CCNT1. Associates with the P-TEFb complex composed at least of Tat, P-TEFb (CDK9 and CCNT1), TAR RNA, RNA Pol II. Recruits the HATs CREBBP, TAF1/TFIID, EP300, PCAF and GCN5L2. Interacts with host KAT5/Tip60; this interaction targets the latter to degradation. Interacts with the host deacetylase SIRT1. Interacts with host capping enzyme RNGTT; this interaction stimulates RNGTT. Binds to host KDR, and to the host integrins ITGAV/ITGB3 and ITGA5/ITGB1. Interacts with host KPNB1/importin beta-1 without previous binding to KPNA1/importin alpha-1. Interacts with EIF2AK2. Interacts with host nucleosome assembly protein NAP1L1; this interaction may be required for the transport of Tat within the nucleus, since the two proteins interact at the nuclear rim. Interacts with host C1QBP/SF2P32; this interaction involves lysine-acetylated Tat. Interacts with the host chemokine receptors CCR2, CCR3 and CXCR4. Interacts with host DPP4/CD26; this interaction may trigger an anti-proliferative effect. Interacts with host LDLR. Interacts with the host extracellular matrix metalloproteinase MMP1. Interacts with host PRMT6; this interaction mediates Tat's methylation. Interacts with, and is ubiquitinated by MDM2/Hdm2. Interacts with host PSMC3 and HTATIP2. Interacts with STAB1; this interaction may overcome SATB1-mediated repression of IL2 and IL2RA (interleukin) in T cells by binding to the same domain than HDAC1. Interacts (when acetylated) with human CDK13, thereby increasing HIV-1 mRNA splicing and promoting the production of the doubly spliced HIV-1 protein Nef. Interacts with host TBP; this interaction modulates the activity of transcriptional pre-initiation complex. Interacts with host RELA. Interacts with host PLSCR1; this interaction negatively regulates Tat transactivation activity by altering its subcellular distribution. Post-translationally, asymmetrical arginine methylation by host PRMT6 seems to diminish the transactivation capacity of Tat and affects the interaction with host CCNT1. In terms of processing, acetylation by EP300, CREBBP, GCN5L2/GCN5 and PCAF regulates the transactivation activity of Tat. EP300-mediated acetylation of Lys-50 promotes dissociation of Tat from the TAR RNA through the competitive binding to PCAF's bromodomain. In addition, the non-acetylated Tat's N-terminus can also interact with PCAF. PCAF-mediated acetylation of Lys-28 enhances Tat's binding to CCNT1. Lys-50 is deacetylated by SIRT1. Polyubiquitination by host MDM2 does not target Tat to degradation, but activates its transactivation function and fosters interaction with CCNT1 and TAR RNA. Post-translationally, phosphorylated by EIF2AK2 on serine and threonine residues adjacent to the basic region important for TAR RNA binding and function. Phosphorylation of Tat by EIF2AK2 is dependent on the prior activation of EIF2AK2 by dsRNA.

It is found in the host nucleus. It localises to the host nucleolus. Its subcellular location is the host cytoplasm. The protein localises to the secreted. Transcriptional activator that increases RNA Pol II processivity, thereby increasing the level of full-length viral transcripts. Recognizes a hairpin structure at the 5'-LTR of the nascent viral mRNAs referred to as the transactivation responsive RNA element (TAR) and recruits the cyclin T1-CDK9 complex (P-TEFb complex) that will in turn hyperphosphorylate the RNA polymerase II to allow efficient elongation. The CDK9 component of P-TEFb and other Tat-activated kinases hyperphosphorylate the C-terminus of RNA Pol II that becomes stabilized and much more processive. Other factors such as HTATSF1/Tat-SF1, SUPT5H/SPT5, and HTATIP2 are also important for Tat's function. Besides its effect on RNA Pol II processivity, Tat induces chromatin remodeling of proviral genes by recruiting the histone acetyltransferases (HATs) CREBBP, EP300 and PCAF to the chromatin. This also contributes to the increase in proviral transcription rate, especially when the provirus integrates in transcriptionally silent region of the host genome. To ensure maximal activation of the LTR, Tat mediates nuclear translocation of NF-kappa-B by interacting with host RELA. Through its interaction with host TBP, Tat may also modulate transcription initiation. Tat can reactivate a latently infected cell by penetrating in it and transactivating its LTR promoter. In the cytoplasm, Tat is thought to act as a translational activator of HIV-1 mRNAs. Its function is as follows. Extracellular circulating Tat can be endocytosed by surrounding uninfected cells via the binding to several surface receptors such as CD26, CXCR4, heparan sulfate proteoglycans (HSPG) or LDLR. Neurons are rarely infected, but they internalize Tat via their LDLR. Through its interaction with nuclear HATs, Tat is potentially able to control the acetylation-dependent cellular gene expression. Modulates the expression of many cellular genes involved in cell survival, proliferation or in coding for cytokines or cytokine receptors. Tat plays a role in T-cell and neurons apoptosis. Tat induced neurotoxicity and apoptosis probably contribute to neuroAIDS. Circulating Tat also acts as a chemokine-like and/or growth factor-like molecule that binds to specific receptors on the surface of the cells, affecting many cellular pathways. In the vascular system, Tat binds to ITGAV/ITGB3 and ITGA5/ITGB1 integrins dimers at the surface of endothelial cells and competes with bFGF for heparin-binding sites, leading to an excess of soluble bFGF. This is Protein Tat from Human immunodeficiency virus type 1 group M subtype B (isolate SF33) (HIV-1).